The sequence spans 223 residues: RNA-free ribonuclease P (223 aa).

It belongs to the HARP family.

It catalyses the reaction Endonucleolytic cleavage of RNA, removing 5'-extranucleotides from tRNA precursor.. In terms of biological role, RNA-free RNase P that catalyzes the removal of the 5'-leader sequence from pre-tRNA to produce the mature 5'-terminus. The polypeptide is RNA-free ribonuclease P (Methanococcus maripaludis (strain C5 / ATCC BAA-1333)).